Reading from the N-terminus, the 243-residue chain is tRNA pseudouridine synthase A (243 aa).

The active-site Nucleophile is aspartate 53. Tyrosine 111 serves as a coordination point for substrate.

It belongs to the tRNA pseudouridine synthase TruA family. Homodimer.

It catalyses the reaction uridine(38/39/40) in tRNA = pseudouridine(38/39/40) in tRNA. Formation of pseudouridine at positions 38, 39 and 40 in the anticodon stem and loop of transfer RNAs. In Pelodictyon phaeoclathratiforme (strain DSM 5477 / BU-1), this protein is tRNA pseudouridine synthase A.